Consider the following 521-residue polypeptide: MRLHAFTLLSLLGLVPSFAAASLSGSVGPLTSASAKAAKKTCNVLDYGAKADKKTDLGPPLAAAFAACKSGGLVYIPAGDYAMSTWVKLANGKAWALQIDGVIYRTGTDGGNMIMIEHTSDFELYSSTSSGAMQGLGYEFHASNNWSGPRLLRLWDVSDFSVHDLILVDSPSFHFSIDTCSNGEVYNMAIRGGNHGGLDGVDVWSTNIWIHDLEVTNKDECVTVKSPAKNILVENIYCNLSGGCAMGSLGADTDISDITYKNIYTWNSNQMMMIKSNGGSGTVSNVVFENFIGHGNAYSLDIDSFWSSMSAVSGDGVTLNNITIKNWKGTEANGAQRGPIKIICPDKVPCYNILIEDFAMWTETGSKQWYSCQSAYGSGFCLKSGSHHTSYAVTTTTVSSAPSGYSAAKMASDLSTDFGSTKSIPIPTIPTSFYPGATPYSALMSKQSTKAAKARAVDMSVETPAAASRSEQVVQGAPQETGQSAPESAGPVPSGNPGPVPTGGSRPSRHRHGHHHFGSAI.

A signal peptide spans 1-21 (MRLHAFTLLSLLGLVPSFAAA). A disulfide bond links Cys-42 and Cys-68. An N-linked (GlcNAc...) asparagine glycan is attached at Asn-145. Asp-219 (proton donor) is an active-site residue. The cysteines at positions 221 and 238 are disulfide-linked. Residue Asn-239 is glycosylated (N-linked (GlcNAc...) asparagine). His-294 is an active-site residue. N-linked (GlcNAc...) asparagine glycosylation occurs at Asn-321. 2 disulfide bridges follow: Cys-344–Cys-350 and Cys-372–Cys-381. Positions 462–521 (ETPAAASRSEQVVQGAPQETGQSAPESAGPVPSGNPGPVPTGGSRPSRHRHGHHHFGSAI) are disordered. The span at 469–486 (RSEQVVQGAPQETGQSAP) shows a compositional bias: polar residues. Positions 507 to 521 (PSRHRHGHHHFGSAI) are enriched in basic residues.

It belongs to the glycosyl hydrolase 28 family.

The protein resides in the secreted. It carries out the reaction Endohydrolysis of alpha-D-GalA-(1-&gt;2)-alpha-L-Rha glycosidic bond in the rhamnogalacturonan I backbone with initial inversion of anomeric configuration releasing oligosaccharides with beta-D-GalA at the reducing end.. Pectinolytic enzymes consist of four classes of enzymes: pectine lyase, polygalacturonase, pectin methylesterase and rhamnogalacturonase. Hydrolyzes alpha-D-galacturonopyranosyl-(1,2)-alpha-L-rhamnopyranosyl linkages in the backbone of the hairy regions of pectins. In Aspergillus fumigatus (strain CBS 144.89 / FGSC A1163 / CEA10) (Neosartorya fumigata), this protein is Probable rhamnogalacturonase B (rhgB).